Consider the following 171-residue polypeptide: Prolyl-tRNA synthetase associated domain-containing protein 1 (171 aa).

The protein belongs to the PRORSD1 family.

This chain is Prolyl-tRNA synthetase associated domain-containing protein 1 (PRORSD1), found in Bos taurus (Bovine).